Reading from the N-terminus, the 111-residue chain is Kalata-B7 (111 aa).

An N-terminal signal peptide occupies residues 1 to 28 (MAKFTNCLALCLLLAAVVGAFGVELSEA). The propeptide occupies 29–75 (DKSAVVNEIAEKMALQEMLDGVDKLFLRKMKSSETTLTMFLKEMQLK). Residues 76–104 (GLPVCGETCTLGTCYTQGCTCSWPICKRN) constitute a cross-link (cyclopeptide (Gly-Asn)). 3 disulfides stabilise this stretch: Cys80–Cys94, Cys84–Cys96, and Cys89–Cys101. Residues 105–111 (GLPDVAA) constitute a propeptide that is removed on maturation.

Post-translationally, kalata-B7 is a cyclic peptide.

Functionally, probably participates in a plant defense mechanism. Has hemolytic activity. The sequence is that of Kalata-B7 (OAK3) from Oldenlandia affinis.